A 605-amino-acid chain; its full sequence is Pyruvate decarboxylase 1 (605 aa).

The substrate site is built by aspartate 67 and histidine 154. Residues 432–514 form a thiamine pyrophosphate binding region; that stretch reads DSWFNCQKLR…FLINNGGYTI (83 aa). Residues aspartate 482, asparagine 509, and glycine 511 each coordinate Mg(2+). Glutamate 515 contributes to the substrate binding site.

The protein belongs to the TPP enzyme family. As to quaternary structure, homotetramer. It depends on a metal cation as a cofactor. The cofactor is thiamine diphosphate.

The enzyme catalyses a 2-oxocarboxylate + H(+) = an aldehyde + CO2. The sequence is that of Pyruvate decarboxylase 1 (PDC1) from Oryza sativa subsp. japonica (Rice).